The following is a 721-amino-acid chain: Catalase-peroxidase (721 aa).

Residues 95-223 (WHSAGSYRLF…LGAVHMGLIY (129 aa)) constitute a cross-link (tryptophyl-tyrosyl-methioninium (Trp-Tyr) (with M-249)). H96 (proton acceptor) is an active-site residue. A cross-link (tryptophyl-tyrosyl-methioninium (Tyr-Met) (with W-95)) is located at residues 223 to 249 (YVNPQGRDGKPDPLKSAHDVRVTFKRM). Residue H264 coordinates heme b.

This sequence belongs to the peroxidase family. Peroxidase/catalase subfamily. Homodimer or homotetramer. Requires heme b as cofactor. Post-translationally, formation of the three residue Trp-Tyr-Met cross-link is important for the catalase, but not the peroxidase activity of the enzyme.

The catalysed reaction is H2O2 + AH2 = A + 2 H2O. The enzyme catalyses 2 H2O2 = O2 + 2 H2O. Functionally, bifunctional enzyme with both catalase and broad-spectrum peroxidase activity. This is Catalase-peroxidase from Parvibaculum lavamentivorans (strain DS-1 / DSM 13023 / NCIMB 13966).